A 63-amino-acid polypeptide reads, in one-letter code: Large ribosomal subunit protein bL32 (63 aa).

The tract at residues 1-45 is disordered; it reads MAVQQNKKSRSRRDMRRSHDALTKPTLSVDPTTGETHLRHHMTPD. The span at 7–16 shows a compositional bias: basic residues; sequence KKSRSRRDMR. Positions 25–35 are enriched in polar residues; that stretch reads PTLSVDPTTGE.

It belongs to the bacterial ribosomal protein bL32 family.

This Legionella pneumophila (strain Paris) protein is Large ribosomal subunit protein bL32.